Consider the following 950-residue polypeptide: MSDNPFNASLLDEDSNREREILDATAEALSKPSPSLEYCTLSVDEALEKLDTDKNGGLRSSNEANNRRSLYGPNEITVEDDESLFKKFLSNFIEDRMILLLIGSAVVSLFMGNIDDAVSITLAIFIVVTVGFVQEYRSEKSLEALNKLVPAECHLMRCGQESHVLASTLVPGDLVHFRIGDRIPADIRIIEAIDLSIDESNLTGENEPVHKTSQTIEKSSFNDQPNSIVPISERSCIAYMGTLVKEGHGKGIVVGTGTNTSFGAVFEMMNNIEKPKTPLQLTMDKLGKDLSLVSFIVIGMICLVGIIQGRSWLEMFQISVSLAVAAIPEGLPIIVTVTLALGVLRMAKRKAIVRRLPSVETLGSVNVICSDKTGTLTSNHMTVSKLWCLDSMSNKLNVLSLDKNKKTKNSNGNLKNYLTEDVRETLTIGNLCNNASFSQEHAIFLGNPTDVALLEQLANFEMPDIRNTVQKVQELPFNSKRKLMATKILNPVDNKCTVYVKGAFERILEYSTSYLKSKGKKTEKLTEAQKATINECANSMASEGLRVFGFAKLTLSDSSTPLTEDLIKDLTFTGLIGMNDPPRPNVKFAIEQLLQGGVHIIMITGDSENTAVNIAKQIGIPVIDPKLSVLSGDKLDEMSDDQLANVIDHVNIFARATPEHKLNIVRALRKRGDVVAMTGDGVNDAPALKLSDIGVSMGRIGTDVAKEASDMVLTDDDFSTILTAIEEGKGIFNNIQNFLTFQLSTSVAALSLVALSTAFKLPNPLNAMQILWINILMDGPPAQSLGVEPVDHEVMKKPPRKRTDKILTHDVMKRLLTTAACIIVGTVYIFVKEMAEDGKVTARDTTMTFTCFVFFDMFNALACRHNTKSIFEIGFFTNKMFNYAVGLSLLGQMCAIYIPFFQSIFKTEKLGISDILLLLLISSSVFIVDELRKLWTRKKNEEDSTYFSNV.

N-acetylserine is present on serine 2. Residues serine 2–phenylalanine 92 lie on the Cytoplasmic side of the membrane. The helical transmembrane segment at isoleucine 93–methionine 111 threads the bilayer. Topologically, residues glycine 112–aspartate 116 are lumenal. A helical membrane pass occupies residues alanine 117–valine 133. Residues glutamine 134–lysine 288 lie on the Cytoplasmic side of the membrane. A Phosphoserine modification is found at serine 227. The helical transmembrane segment at aspartate 289 to glycine 309 threads the bilayer. At arginine 310–alanine 323 the chain is on the lumenal side. Residues valine 324–leucine 344 form a helical membrane-spanning segment. The Cytoplasmic segment spans residues arginine 345 to arginine 814. Aspartate 371 functions as the 4-aspartylphosphate intermediate in the catalytic mechanism. Residues leucine 815–alanine 835 form a helical membrane-spanning segment. The Lumenal portion of the chain corresponds to glutamate 836–aspartate 844. A helical transmembrane segment spans residues threonine 845 to alanine 862. Topologically, residues cysteine 863–alanine 884 are cytoplasmic. The chain crosses the membrane as a helical span at residues valine 885–phenylalanine 905. Topologically, residues lysine 906–lysine 909 are lumenal. Residues leucine 910–glutamate 930 traverse the membrane as a helical segment. Residues leucine 931–valine 950 are Cytoplasmic-facing.

This sequence belongs to the cation transport ATPase (P-type) (TC 3.A.3) family.

The protein resides in the golgi apparatus membrane. It catalyses the reaction Ca(2+)(in) + ATP + H2O = Ca(2+)(out) + ADP + phosphate + H(+). Its function is as follows. This magnesium-dependent enzyme catalyzes the hydrolysis of ATP coupled with the transport of calcium. Has a role in the secretory pathway. This chain is Calcium-transporting ATPase 1 (PMR1), found in Saccharomyces cerevisiae (strain ATCC 204508 / S288c) (Baker's yeast).